A 357-amino-acid polypeptide reads, in one-letter code: DNA replication and repair protein RecF (357 aa).

ATP is bound at residue 30–37 (GANGSGKT).

The protein belongs to the RecF family.

It localises to the cytoplasm. In terms of biological role, the RecF protein is involved in DNA metabolism; it is required for DNA replication and normal SOS inducibility. RecF binds preferentially to single-stranded, linear DNA. It also seems to bind ATP. The sequence is that of DNA replication and repair protein RecF from Salmonella paratyphi A (strain ATCC 9150 / SARB42).